Here is a 115-residue protein sequence, read N- to C-terminus: Pro-neuregulin-4, membrane-bound isoform (115 aa).

The Extracellular segment spans residues 1 to 62; it reads MPTDHEQPCG…SSIPSESNLS (62 aa). The EGF-like domain maps to 5–46; that stretch reads HEQPCGPRHRSFCLNGGICYVIPTIPSPFCRCIENYTGARCE. Cystine bridges form between cysteine 9–cysteine 23, cysteine 17–cysteine 34, and cysteine 36–cysteine 45. N-linked (GlcNAc...) asparagine glycosylation is found at asparagine 39 and asparagine 60. A helical transmembrane segment spans residues 63–83; the sequence is AAFVVLAVLLTLTIAALCFLC. Residues 84 to 115 lie on the Cytoplasmic side of the membrane; it reads RKGHLQRASSVQCEISLVETNNTRTRHSHREH.

This sequence belongs to the neuregulin family. Interacts with ERBB4. Proteolytic cleavage close to the plasma membrane on the external face leads to the release of the soluble growth factor form. Post-translationally, extensive glycosylation precedes the proteolytic cleavage. Highly expressed in pancreas; weakly expressed in muscle.

It localises to the cell membrane. The protein localises to the secreted. Functionally, low affinity ligand for the ERBB4 tyrosine kinase receptor. Concomitantly recruits ERBB1 and ERBB2 coreceptors, resulting in ligand-stimulated tyrosine phosphorylation and activation of the ERBB receptors. Does not bind to the ERBB1, ERBB2 and ERBB3 receptors. This chain is Pro-neuregulin-4, membrane-bound isoform (Nrg4), found in Mus musculus (Mouse).